We begin with the raw amino-acid sequence, 364 residues long: 4-hydroxy-3-methylbut-2-en-1-yl diphosphate synthase (flavodoxin) (364 aa).

Cysteine 268, cysteine 271, cysteine 303, and glutamate 310 together coordinate [4Fe-4S] cluster.

The protein belongs to the IspG family. The cofactor is [4Fe-4S] cluster.

It catalyses the reaction (2E)-4-hydroxy-3-methylbut-2-enyl diphosphate + oxidized [flavodoxin] + H2O + 2 H(+) = 2-C-methyl-D-erythritol 2,4-cyclic diphosphate + reduced [flavodoxin]. The protein operates within isoprenoid biosynthesis; isopentenyl diphosphate biosynthesis via DXP pathway; isopentenyl diphosphate from 1-deoxy-D-xylulose 5-phosphate: step 5/6. Functionally, converts 2C-methyl-D-erythritol 2,4-cyclodiphosphate (ME-2,4cPP) into 1-hydroxy-2-methyl-2-(E)-butenyl 4-diphosphate. The chain is 4-hydroxy-3-methylbut-2-en-1-yl diphosphate synthase (flavodoxin) from Desulfotalea psychrophila (strain LSv54 / DSM 12343).